The primary structure comprises 419 residues: Innexin inx5 (419 aa).

Over 1–21 (MFSAVKPLSKYLQFKSIRIYD) the chain is Cytoplasmic. Residues 22–42 (SVFTIHSRCTVVILLTCSLLL) form a helical membrane-spanning segment. The Extracellular segment spans residues 43-162 (SARQYFGDPI…QTERQYLRYY (120 aa)). A helical membrane pass occupies residues 163–183 (QWVIILLLFQSFVFYFPSCLW). The Cytoplasmic segment spans residues 184-238 (KVWEGRRLKQLCSEVGDALLSEETYNTRLRMLVKYFTTDYEDMHFCYMAKYVFCE). A helical transmembrane segment spans residues 239–259 (VLNFLISVVNIIVLEVFLNGF). The Extracellular portion of the chain corresponds to 260-320 (WSKYLRALAT…ILPLNILNEK (61 aa)). The helical transmembrane segment at 321-341 (IFVFLWAWFLLMALMSGLNLL) threads the bilayer. At 342–419 (CRLAMICSRY…ASGSTLESPV (78 aa)) the chain is on the cytoplasmic side.

The protein belongs to the pannexin family. Expressed in the cortex of the pupal CNS and at low levels in the wing imaginal disk.

The protein resides in the cell membrane. It localises to the cell junction. Its subcellular location is the gap junction. Its function is as follows. Structural component of the gap junctions. This Drosophila melanogaster (Fruit fly) protein is Innexin inx5 (Inx5).